The sequence spans 293 residues: SAGA-associated factor 29 (293 aa).

A coiled-coil region spans residues 3–88 (LVSADSRIAE…KALDKIAEIK (86 aa)). Residues 152–293 (GDYVAKPGDK…VVACKEPKKK (142 aa)) form the SGF29 C-terminal domain. 2 histone H3K4me3 N-terminus binding regions span residues 194–196 (DID) and 240–243 (QTTC). The histone H3K4me3 binding stretch occupies residues 264 to 266 (FED). Lys288 carries the post-translational modification N6-acetyllysine.

This sequence belongs to the SGF29 family. Interacts with dimethylated and trimethylated 'Lys-4' of histone H3 (H3K4me2 and H3K4me3), with a preference for the trimethylated form (H3K4me3). Component of some SAGA-type complexes. Component of the ADA2A-containing complex (ATAC), composed of KAT14, KAT2A, TADA2L, TADA3L, ZZ3, MBIP, WDR5, YEATS2, CCDC101 and DR1. Interacts with (methylated) CGAS. Interacts with TADA3L, GCN5L2, SUPT3H and MYC. Widely expressed with highest levels in testis. Highly expressed in hepatoma and other tumor cell lines.

The protein localises to the nucleus. Chromatin reader component of some histone acetyltransferase (HAT) SAGA-type complexes like the TFTC-HAT, ATAC or STAGA complexes. SGF29 specifically recognizes and binds methylated 'Lys-4' of histone H3 (H3K4me), with a preference for trimethylated form (H3K4me3). In the SAGA-type complexes, SGF29 is required to recruit complexes to H3K4me. Involved in the response to endoplasmic reticulum (ER) stress by recruiting the SAGA complex to H3K4me, thereby promoting histone H3 acetylation and cell survival. Also binds non-histone proteins that are methylated on Lys residues: specifically recognizes and binds CGAS monomethylated on 'Lys-491'. May be involved in MYC-mediated oncogenic transformation. The polypeptide is SAGA-associated factor 29 (Rattus norvegicus (Rat)).